The sequence spans 502 residues: ATP synthase subunit alpha (502 aa).

Residue 169–176 (GDKQTGKT) participates in ATP binding.

It belongs to the ATPase alpha/beta chains family. In terms of assembly, F-type ATPases have 2 components, CF(1) - the catalytic core - and CF(0) - the membrane proton channel. CF(1) has five subunits: alpha(3), beta(3), gamma(1), delta(1), epsilon(1). CF(0) has three main subunits: a(1), b(2) and c(9-12). The alpha and beta chains form an alternating ring which encloses part of the gamma chain. CF(1) is attached to CF(0) by a central stalk formed by the gamma and epsilon chains, while a peripheral stalk is formed by the delta and b chains.

Its subcellular location is the cell membrane. The catalysed reaction is ATP + H2O + 4 H(+)(in) = ADP + phosphate + 5 H(+)(out). Its function is as follows. Produces ATP from ADP in the presence of a proton gradient across the membrane. The alpha chain is a regulatory subunit. The chain is ATP synthase subunit alpha from Lachnoclostridium phytofermentans (strain ATCC 700394 / DSM 18823 / ISDg) (Clostridium phytofermentans).